The following is a 440-amino-acid chain: Xylose isomerase (440 aa).

Residues His100 and Asp103 contribute to the active site. 7 residues coordinate Mg(2+): Glu231, Glu267, His270, Asp295, Asp306, Asp308, and Asp338.

It belongs to the xylose isomerase family. As to quaternary structure, homotetramer. It depends on Mg(2+) as a cofactor.

It is found in the cytoplasm. The enzyme catalyses alpha-D-xylose = alpha-D-xylulofuranose. The chain is Xylose isomerase from Burkholderia orbicola (strain MC0-3).